The following is a 383-amino-acid chain: Acetylornithine deacetylase (383 aa).

Position 80 (His-80) interacts with Zn(2+). Residue Asp-82 is part of the active site. Asp-112 is a Zn(2+) binding site. The active site involves Glu-144. Positions 145, 169, and 355 each coordinate Zn(2+).

This sequence belongs to the peptidase M20A family. ArgE subfamily. Homodimer. The cofactor is Zn(2+). Co(2+) serves as cofactor. Glutathione is required as a cofactor.

It localises to the cytoplasm. The catalysed reaction is N(2)-acetyl-L-ornithine + H2O = L-ornithine + acetate. It participates in amino-acid biosynthesis; L-arginine biosynthesis; L-ornithine from N(2)-acetyl-L-ornithine (linear): step 1/1. Catalyzes the hydrolysis of the amide bond of N(2)-acetylated L-amino acids. Cleaves the acetyl group from N-acetyl-L-ornithine to form L-ornithine, an intermediate in L-arginine biosynthesis pathway, and a branchpoint in the synthesis of polyamines. In Shigella sonnei (strain Ss046), this protein is Acetylornithine deacetylase.